Here is a 780-residue protein sequence, read N- to C-terminus: Cation channel sperm-associated protein 1 (780 aa).

Disordered stretches follow at residues 1-37 (MDQN…PGHS), 71-306 (LSSH…QDHH), and 376-412 (QMSK…LQRT). The Cytoplasmic portion of the chain corresponds to 1-447 (MDQNSVPEKA…EMIRNLTQSL (447 aa)). The segment covering 110 to 122 (SYGEDYHDELQRD) has biased composition (basic and acidic residues). Over residues 211 to 241 (QVPHRGWPHHHQVHHHGRSRHHEAHQHGKSP) the composition is skewed to basic residues. The segment covering 261-284 (SDYHSEYHQGDHHPSEYHHGDHPH) has biased composition (basic and acidic residues). Residues 285 to 299 (HTQHHYHQTHRHRDY) are compositionally biased toward basic residues. A compositionally biased stretch (basic and acidic residues) spans 387 to 401 (STKHSEDWGKEEGQF). Basic residues predominate over residues 402-412 (QKRKTGRLQRT). A helical transmembrane segment spans residues 448 to 469 (AFETFIFFVVCLNTVMLVAQTF). Residues 470–478 (AEVEIRGEW) are Extracellular-facing. The chain crosses the membrane as a helical span at residues 479–500 (YFMALDSIFFCIYVVEALLKII). At 501–508 (ALGLSYFF) the chain is on the cytoplasmic side. The helical transmembrane segment at 509-531 (DFWNNLDFFIMAMAVLDFLLMQT) threads the bilayer. At 532–540 (HSFAIYHQS) the chain is on the extracellular side. The helical transmembrane segment at 541 to 563 (LFRILKVFKSLRALRAIRVLRRL) threads the bilayer. Over 564–581 (SFLTSVQEVTGTLGQSLP) the chain is Cytoplasmic. A helical transmembrane segment spans residues 582–604 (SIAAILILMFTCLFLFSAVLRAL). At 605–615 (FRKSDPKRFQN) the chain is on the extracellular side. Residues 616-628 (IFTTIFTLFTLLT) constitute an intramembrane region (helical; Pore-forming). Over 629-645 (LDDWSLIYMDSRAQGAW) the chain is Extracellular. A helical membrane pass occupies residues 646 to 671 (YIIPILVIYIIIQYFIFLNLVITVLV). At 672–780 (DSFQTALFKG…FEAGEEDFRN (109 aa)) the chain is on the cytoplasmic side.

The protein belongs to the cation channel sperm-associated (TC 1.A.1.19) family. In terms of assembly, component of the CatSper complex or CatSpermasome composed of the core pore-forming members CATSPER1, CATSPER2, CATSPER3 and CATSPER4 as well as auxiliary members CATSPERB, CATSPERG, CATSPERD, CATSPERE, CATSPERZ, C2CD6/CATSPERT, TMEM249, TMEM262 and EFCAB9. HSPA1 may be an additional auxiliary complex member. The core complex members CATSPER1, CATSPER2, CATSPER3 and CATSPER4 form a heterotetrameric channel. The auxiliary CATSPERB, CATSPERG, CATSPERD and CATSPERE subunits form a pavilion-like structure over the pore which stabilizes the complex through interactions with CATSPER4, CATSPER3, CATSPER1 and CATSPER2 respectively. TMEM262/CATSPERH interacts with CATSPERB, further stabilizing the complex. C2CD6/CATSPERT interacts at least with CATSPERD and is required for targeting the CatSper complex in the flagellar membrane. Interacts with Ca(v)3.3/CACNA1I, leading to suppression of T-type calcium channel activity. Testis-specific.

Its subcellular location is the cell projection. The protein resides in the cilium. It is found in the flagellum membrane. The enzyme catalyses Ca(2+)(in) = Ca(2+)(out). With respect to regulation, the CatSper calcium channel is indirectly activated by extracellular progesterone and prostaglandins following the sequence: progesterone &gt; PGF1-alpha = PGE1 &gt; PGA1 &gt; PGE2 &gt;&gt; PGD2. The CatSper calcium channel is directly inhibited by endocannabinoid 2-arachidonoylglycerol (2AG). Indirect activation by progesterone takes place via the following mechanism: progesterone binds and activates the acylglycerol lipase ABHD2, which in turn mediates hydrolysis of 2AG inhibitor, relieving inhibition of the CatSper channel. The primary effect of progesterone activation is to shift voltage dependence towards more physiological, negative membrane potentials; it is not mediated by metabotropic receptors and second messengers. Sperm capacitation enhances the effect of progesterone by providing additional negative shift. Also activated by the elevation of intracellular pH. Pore-forming subunit of the CatSper complex, a sperm-specific voltage-gated calcium channel that plays a central role in calcium-dependent physiological responses essential for successful fertilization, such as sperm hyperactivation, acrosome reaction and chemotaxis towards the oocyte. In Homo sapiens (Human), this protein is Cation channel sperm-associated protein 1 (CATSPER1).